The following is a 336-amino-acid chain: Potassium channel subfamily K member 1 (336 aa).

At 1–20 (MLQSLAGSSCVRLVERHRSA) the chain is on the cytoplasmic side. A helical membrane pass occupies residues 21 to 41 (WCFGFLVLGYLLYLVFGAVVF). The Extracellular segment spans residues 42–103 (SSVELPYEDL…SNASGNWNWD (62 aa)). N-linked (GlcNAc...) asparagine glycosylation is present at asparagine 95. Positions 104–116 (FTSALFFASTVLS) form an intramembrane region, helical. Residues 117 to 122 (TTGYGH) lie within the membrane without spanning it. The tract at residues 117–122 (TTGYGH) is selectivity filter 1. Over 123–132 (TVPLSDGGKA) the chain is Extracellular. Residues 133 to 156 (FCIIYSVIGIPFTLLFLTAVVQRV) traverse the membrane as a helical segment. Residues 157 to 181 (TVHVTRRPVLYFHIRWGFSKQVVAI) lie on the Cytoplasmic side of the membrane. The helical transmembrane segment at 182–202 (VHAVLLGFVTVSCFFFIPAAV) threads the bilayer. The Extracellular portion of the chain corresponds to 203 to 211 (FSVLEDDWN). The helical intramembrane region spans 212–224 (FLESFYFCFISLS). The selectivity filter 2 stretch occupies residues 225 to 230 (TIGLGD). An intramembrane segment occupies 225–231 (TIGLGDY). Residues 232-243 (VPGEGYNQKFRE) are Extracellular-facing. Residues 244–267 (LYKIGITCYLLLGLIAMLVVLETF) traverse the membrane as a helical segment. The Cytoplasmic portion of the chain corresponds to 268 to 336 (CELHELKKFR…PPYEDGSANH (69 aa)). Lysine 274 is covalently cross-linked (Glycyl lysine isopeptide (Lys-Gly) (interchain with G-Cter in SUMO)). The important for intracellular retention in recycling endosomes stretch occupies residues 293–299 (IMEHDQL). The segment at 310-336 (GLKEEQKQNEPFVASQSPPYEDGSANH) is disordered. Serine 326 is modified (phosphoserine).

It belongs to the two pore domain potassium channel (TC 1.A.1.8) family. Homodimer; disulfide-linked. Heterodimer with KCNK2; disulfide-linked. In astrocytes, forms mostly heterodimeric potassium channels with KCNK2, with only a minor proportion of functional channels containing homodimeric KCNK1. Interacts with KCNK3 and KCNK9, forming functional heterodimeric channels. Interacts with GNG4. Identified in a complex with PSD and ARF6; interacts only with PSD that is bound to ARF6. Interacts with UBE2I. Post-translationally, sumoylation is controversial. Sumoylated by UBE2I. Not sumoylated when expressed in xenopus oocytes or mammalian cells. Sumoylation inactivates the channel, but does not interfere with expression at the cell membrane. Sumoylation of a single subunit is sufficient to silence the dimeric channel. Sumoylation of KCNK1 is sufficient to silence heterodimeric channels formed by KCNK1 and KCNK3 or KCNK9. Desumoylated by SENP1; this activates the channel. Desumoylated by SENP1; this strongly increases halothane-mediated activation of heterodimeric channels formed with KCNK9. SENP1 treatment has no effect. As to expression, detected in brain and in kidney cortex and medulla, especially at the renal brush border membranes of the proximal convoluted tubules, in distal tubules and on intercalated cells of the collecting duct. Detected in cerebellum granule neurons. Detected in astrocytes in hippocampus stratum radiatum. Highly expressed in the stria vascularis in the cochlea. Detected in neurons in Scarpa's ganglion in the inner ear, at nerve terminals in the crista ampullaris, in supporting cells and dark cells, but not in hair cells (at protein level). Detected in the brain cerebellar granule cell layer, amygdala, thalamus reticular nucleus, habenula, mesencephalic trigeminal neurons, neocortex and piriform cortex, and at lower levels in the olfactory bulb. Detected in Scarpa's ganglia and crista ampullaris in the inner ear.

It is found in the cell membrane. It localises to the recycling endosome. The protein resides in the apical cell membrane. Its subcellular location is the cytoplasmic vesicle. The protein localises to the perikaryon. It is found in the cell projection. It localises to the dendrite. The protein resides in the synaptic cell membrane. The enzyme catalyses K(+)(in) = K(+)(out). It carries out the reaction NH4(+)(in) = NH4(+)(out). It catalyses the reaction Na(+)(in) = Na(+)(out). The catalysed reaction is Rb(+)(in) = Rb(+)(out). The enzyme catalyses Cs(+)(in) = Cs(+)(out). It carries out the reaction Li(+)(in) = Li(+)(out). It catalyses the reaction L-glutamate(out) = L-glutamate(in). The catalysed reaction is chloride(in) = chloride(out). Its activity is regulated as follows. Inhibited by 100 uM quinine. Slightly inhibited by Ba(+). Activity is first increased and then decreased when the extracellular pH is lowered to 6.0. In terms of biological role, ion channel that contributes to passive transmembrane potassium transport and to the regulation of the resting membrane potential in brain astrocytes, but also in kidney and in other tissues. Forms dimeric channels through which potassium ions pass in accordance with their electrochemical gradient. The channel is selective for K(+) ions at physiological potassium concentrations and at neutral pH, but becomes permeable to Na(+) at subphysiological K(+) levels and upon acidification of the extracellular medium. The homodimer has very low potassium channel activity, when expressed in heterologous systems, and can function as weakly inward rectifying potassium channel. Channel activity is modulated by activation of serotonin receptors. Heterodimeric channels containing KCNK1 and KCNK2 have much higher activity, and may represent the predominant form in astrocytes. Heterodimeric channels containing KCNK1 and KCNK3 or KCNK9 have much higher activity. Heterodimeric channels formed by KCNK1 and KCNK9 may contribute to halothane-sensitive currents. Mediates outward rectifying potassium currents in dentate gyrus granule cells and contributes to the regulation of their resting membrane potential. Contributes to the regulation of action potential firing in dentate gyrus granule cells and down-regulates their intrinsic excitability. Contributes to the regulation of the resting membrane potential of pancreatic beta cells. In astrocytes, the heterodimer formed by KCNK1 and KCNK2 is required for rapid glutamate release in response to activation of G-protein coupled receptors, such as F2R and CNR1. Required for normal ion and water transport in the kidney. The low channel activity of homodimeric KCNK1 may be due to sumoylation. The low channel activity may be due to rapid internalization from the cell membrane and retention in recycling endosomes. Permeable to monovalent cations with ion selectivity for K(+) &gt; Rb(+) &gt;&gt; NH4(+) &gt;&gt; Cs(+) = Na(+) = Li(+). The sequence is that of Potassium channel subfamily K member 1 from Rattus norvegicus (Rat).